The chain runs to 123 residues: uncharacterized protein (123 aa).

Residues 1 to 28 form a disordered region; that stretch reads MGLGSSKRKEEPPHKSEPKTVGRVKRAG. Over residues 7 to 20 the composition is skewed to basic and acidic residues; sequence KRKEEPPHKSEPKT.

Belongs to the TUSC2 family.

This is an uncharacterized protein from Caenorhabditis elegans.